A 665-amino-acid chain; its full sequence is DNA ligase (665 aa).

NAD(+) contacts are provided by residues 31–35 (DKEFD), 80–81 (SL), and glutamate 110. The active-site N6-AMP-lysine intermediate is the lysine 112. Positions 133, 170, 285, and 309 each coordinate NAD(+). 4 residues coordinate Zn(2+): cysteine 403, cysteine 406, cysteine 421, and cysteine 427. The region spanning 587–665 (GHTDKLAGQS…NEEEFLKLIS (79 aa)) is the BRCT domain.

It belongs to the NAD-dependent DNA ligase family. LigA subfamily. Mg(2+) serves as cofactor. It depends on Mn(2+) as a cofactor.

It catalyses the reaction NAD(+) + (deoxyribonucleotide)n-3'-hydroxyl + 5'-phospho-(deoxyribonucleotide)m = (deoxyribonucleotide)n+m + AMP + beta-nicotinamide D-nucleotide.. DNA ligase that catalyzes the formation of phosphodiester linkages between 5'-phosphoryl and 3'-hydroxyl groups in double-stranded DNA using NAD as a coenzyme and as the energy source for the reaction. It is essential for DNA replication and repair of damaged DNA. The polypeptide is DNA ligase (Bacteroides fragilis (strain ATCC 25285 / DSM 2151 / CCUG 4856 / JCM 11019 / LMG 10263 / NCTC 9343 / Onslow / VPI 2553 / EN-2)).